Here is an 89-residue protein sequence, read N- to C-terminus: Small ribosomal subunit protein uS15 (89 aa).

Residues 1 to 10 are compositionally biased toward polar residues; it reads MAVTTDQKSQ. The segment at 1-22 is disordered; that stretch reads MAVTTDQKSQVMRDYQRAAGDT.

Belongs to the universal ribosomal protein uS15 family. Part of the 30S ribosomal subunit. Forms a bridge to the 50S subunit in the 70S ribosome, contacting the 23S rRNA.

Functionally, one of the primary rRNA binding proteins, it binds directly to 16S rRNA where it helps nucleate assembly of the platform of the 30S subunit by binding and bridging several RNA helices of the 16S rRNA. In terms of biological role, forms an intersubunit bridge (bridge B4) with the 23S rRNA of the 50S subunit in the ribosome. The chain is Small ribosomal subunit protein uS15 from Nitrosomonas europaea (strain ATCC 19718 / CIP 103999 / KCTC 2705 / NBRC 14298).